The following is an 85-amino-acid chain: ATP synthase subunit 9, mitochondrial (85 aa).

Transmembrane regions (helical) follow at residues 19–39 (IGAG…GNVF) and 61–81 (ILGF…AFLI).

This sequence belongs to the ATPase C chain family. F-type ATPases have 2 components, CF(1) - the catalytic core - and CF(0) - the membrane proton channel. CF(1) has five subunits: alpha(3), beta(3), gamma(1), delta(1), epsilon(1). CF(0) has three main subunits: a, b and c.

The protein resides in the mitochondrion membrane. This protein is one of the chains of the nonenzymatic membrane component (F0) of mitochondrial ATPase. The polypeptide is ATP synthase subunit 9, mitochondrial (ATP9) (Arabidopsis thaliana (Mouse-ear cress)).